The chain runs to 121 residues: Immunoglobulin kappa variable 2-40 (121 aa).

The signal sequence occupies residues 1 to 19 (MRLPAQLLGLLMLWVPGSS). Positions 20 to 121 (EDIVMTQTPL…YYCMQRIEFP (102 aa)) constitute an Ig-like domain. The tract at residues 21-43 (DIVMTQTPLSLPVTPGEPASISC) is framework-1. Residues C43 and C114 are joined by a disulfide bond. The tract at residues 44–60 (RSSQSLLDSDDGNTYLD) is complementarity-determining-1. Residues 61-75 (WYLQKPGQSPQLLIY) are framework-2. Residues 76–82 (TLSYRAS) are complementarity-determining-2. The segment at 83–114 (GVPDRFSGSGSGTDFTLKISRVEAEDVGVYYC) is framework-3. Positions 115–121 (MQRIEFP) are complementarity-determining-3.

Immunoglobulins are composed of two identical heavy chains and two identical light chains; disulfide-linked.

The protein resides in the secreted. It localises to the cell membrane. In terms of biological role, v region of the variable domain of immunoglobulin light chains that participates in the antigen recognition. Immunoglobulins, also known as antibodies, are membrane-bound or secreted glycoproteins produced by B lymphocytes. In the recognition phase of humoral immunity, the membrane-bound immunoglobulins serve as receptors which, upon binding of a specific antigen, trigger the clonal expansion and differentiation of B lymphocytes into immunoglobulins-secreting plasma cells. Secreted immunoglobulins mediate the effector phase of humoral immunity, which results in the elimination of bound antigens. The antigen binding site is formed by the variable domain of one heavy chain, together with that of its associated light chain. Thus, each immunoglobulin has two antigen binding sites with remarkable affinity for a particular antigen. The variable domains are assembled by a process called V-(D)-J rearrangement and can then be subjected to somatic hypermutations which, after exposure to antigen and selection, allow affinity maturation for a particular antigen. In Homo sapiens (Human), this protein is Immunoglobulin kappa variable 2-40.